A 120-amino-acid polypeptide reads, in one-letter code: Small ribosomal subunit protein uS13 (120 aa).

Positions 92 to 120 (HRKGLPVRGQTTKNNARTRKGKKKTVGSK) are disordered. A compositionally biased stretch (basic residues) spans 107-120 (ARTRKGKKKTVGSK).

The protein belongs to the universal ribosomal protein uS13 family. As to quaternary structure, part of the 30S ribosomal subunit. Forms a loose heterodimer with protein S19. Forms two bridges to the 50S subunit in the 70S ribosome.

In terms of biological role, located at the top of the head of the 30S subunit, it contacts several helices of the 16S rRNA. In the 70S ribosome it contacts the 23S rRNA (bridge B1a) and protein L5 of the 50S subunit (bridge B1b), connecting the 2 subunits; these bridges are implicated in subunit movement. Contacts the tRNAs in the A and P-sites. This Helicobacter hepaticus (strain ATCC 51449 / 3B1) protein is Small ribosomal subunit protein uS13.